We begin with the raw amino-acid sequence, 513 residues long: MSTTTSLIIAILAGILGIVIGFFFRKSLAEKKIRSAEDYAVKIIEDANKDAETKKKELLVEAKDEIFKMKSDLDRENKSRLKEISRQEDRLNSKEENLERKNASLEKKHKKLDSELKKADDMQLKIQSLIDEKELELEKVAGLTSDEAKNIVLERVKTETIREQAAIIKEIESKTKEESEKFAREIISTSIQRYAADQVAESTVSVVNLPNDDMKGRIIGREGRNIRAFETLTGVDLIIDDTPEAVVLSAFDPVRREIARIALEKLIVDGRIHPTRIEEMVEKARKDVDNTIREKGEEACDETNVHGLHPELIKILGKLHYRTSYGQNVLKHSIEVSNIAGMLASELGVNVKLAKRGGLLHDLGKAIDHEIEGPHVELGVNAAKRFKEPKDVINCIEAHHGDVEPTCIESILVQSADAISAARPGARRESMENYIQRLENLEQIANSFDGIESSYAIQAGREIRIMVKPDVIDESSMVILAKDVAHKIESELEYPGQIKVNVIRENRVSDYAK.

Residues 4-24 traverse the membrane as a helical segment; the sequence is TTSLIIAILAGILGIVIGFFF. The interval 78–106 is disordered; that stretch reads KSRLKEISRQEDRLNSKEENLERKNASLE. The 86-residue stretch at 203 to 288 folds into the KH domain; that stretch reads TVSVVNLPND…EMVEKARKDV (86 aa). The HD domain occupies 329-422; that stretch reads VLKHSIEVSN…VQSADAISAA (94 aa).

It belongs to the RNase Y family.

The protein localises to the cell membrane. In terms of biological role, endoribonuclease that initiates mRNA decay. This chain is Ribonuclease Y, found in Finegoldia magna (strain ATCC 29328 / DSM 20472 / WAL 2508) (Peptostreptococcus magnus).